The sequence spans 315 residues: Transposase for insertion sequence element IS640 (315 aa).

The region spanning 5 to 66 is the HTH IS21-type domain; it reads EDFYMIKQMR…PFMDYIDMRL (62 aa). One can recognise an Integrase catalytic domain in the interval 111-285; sequence FETQPGYQLQ…TPEQRSRWSR (175 aa).

It belongs to the transposase IS21/IS408/IS1162 family.

In terms of biological role, involved in the transposition of the insertion sequence. The protein is Transposase for insertion sequence element IS640 (istA) of Shigella sonnei.